A 327-amino-acid polypeptide reads, in one-letter code: Aspartate--ammonia ligase (327 aa).

This sequence belongs to the class-II aminoacyl-tRNA synthetase family. AsnA subfamily.

Its subcellular location is the cytoplasm. It catalyses the reaction L-aspartate + NH4(+) + ATP = L-asparagine + AMP + diphosphate + H(+). The protein operates within amino-acid biosynthesis; L-asparagine biosynthesis; L-asparagine from L-aspartate (ammonia route): step 1/1. The protein is Aspartate--ammonia ligase of Bacillus cereus (strain G9842).